Reading from the N-terminus, the 224-residue chain is RNA-free ribonuclease P (224 aa).

Belongs to the HARP family.

It carries out the reaction Endonucleolytic cleavage of RNA, removing 5'-extranucleotides from tRNA precursor.. Its function is as follows. RNA-free RNase P that catalyzes the removal of the 5'-leader sequence from pre-tRNA to produce the mature 5'-terminus. This chain is RNA-free ribonuclease P, found in Haloarcula marismortui (strain ATCC 43049 / DSM 3752 / JCM 8966 / VKM B-1809) (Halobacterium marismortui).